The chain runs to 60 residues: UPF0509 protein Ent638_2183 (60 aa).

Belongs to the UPF0509 family.

The protein is UPF0509 protein Ent638_2183 of Enterobacter sp. (strain 638).